A 622-amino-acid chain; its full sequence is Chromosomal replication initiator protein DnaA (622 aa).

Residues 1–99 are domain I, interacts with DnaA modulators; that stretch reads MADVPADLAA…SAGEPPAPPA (99 aa). The disordered stretch occupies residues 88-282; it reads DDSAGEPPAP…APGPGEPHAR (195 aa). The tract at residues 100 to 281 is domain II; the sequence is PPMHQSHQGP…PAPGPGEPHA (182 aa). 2 stretches are compositionally biased toward basic and acidic residues: residues 118–137 and 176–210; these read QRDD…RPSD and GYQD…EPWR. The span at 250-262 shows a compositional bias: gly residues; the sequence is PGGHGPGRTGGSV. Residues 282–498 form a domain III, AAA+ region region; it reads RLNPKYLFDT…GALIRVTAFA (217 aa). Positions 326, 328, 329, and 330 each coordinate ATP. Positions 499–622 are domain IV, binds dsDNA; sequence SLNRQPVDLG…TELTNRIKNG (124 aa).

This sequence belongs to the DnaA family. In terms of assembly, oligomerizes as a right-handed, spiral filament on DNA at oriC.

Its subcellular location is the cytoplasm. Functionally, plays an essential role in the initiation and regulation of chromosomal replication. ATP-DnaA binds to the origin of replication (oriC) to initiate formation of the DNA replication initiation complex once per cell cycle. Binds the DnaA box (a 9 base pair repeat at the origin) and separates the double-stranded (ds)DNA. Forms a right-handed helical filament on oriC DNA; dsDNA binds to the exterior of the filament while single-stranded (ss)DNA is stabiized in the filament's interior. The ATP-DnaA-oriC complex binds and stabilizes one strand of the AT-rich DNA unwinding element (DUE), permitting loading of DNA polymerase. After initiation quickly degrades to an ADP-DnaA complex that is not apt for DNA replication. Binds acidic phospholipids. This chain is Chromosomal replication initiator protein DnaA, found in Streptomyces griseus subsp. griseus (strain JCM 4626 / CBS 651.72 / NBRC 13350 / KCC S-0626 / ISP 5235).